The primary structure comprises 257 residues: Global transcriptional regulator CodY (257 aa).

Positions 1–155 are GAF domain; sequence MSLLSKTREL…AATVIGMEIL (155 aa). A DNA-binding region (H-T-H motif) is located at residues 203-222; that stretch reads ASKVADGVGITRSVIVNALR.

It belongs to the CodY family.

The protein localises to the cytoplasm. Its function is as follows. DNA-binding global transcriptional regulator which is involved in the adaptive response to starvation and acts by directly or indirectly controlling the expression of numerous genes in response to nutrient availability. During rapid exponential growth, CodY is highly active and represses genes whose products allow adaptation to nutrient depletion. The chain is Global transcriptional regulator CodY from Staphylococcus aureus (strain bovine RF122 / ET3-1).